Consider the following 365-residue polypeptide: Endophilin-B1 (365 aa).

Residue Met-1 is modified to N-acetylmethionine. The segment at 1–30 (MNIMDFNVKKLAADAGTFLSRAVQFTEEKL) is membrane-binding amphipathic helix. Positions 1 to 37 (MNIMDFNVKKLAADAGTFLSRAVQFTEEKLGQAEKTE) are required for membrane binding. The 235-residue stretch at 27–261 (EEKLGQAEKT…LGSFPSNYLS (235 aa)) folds into the BAR domain. Thr-145 bears the Phosphothreonine; by CDK5 mark. Residues 155 to 195 (YKTIAKERKLLQNKRLDLDAAKTRLKKAKAAETRNSSEQEL) are a coiled coil. An SH3 domain is found at 305-365 (SGSRKARVLY…VPITYLELLN (61 aa)).

This sequence belongs to the endophilin family. In terms of assembly, homodimer, and heterodimer with SH3GLB2. Binds BAX; induction of apoptosis augments BAX binding. Binds DNM1, HTT, AMPH, BIN1 and ARFGAP1. Interacts with UVRAG; UVRAG bridges the interaction to BECN1 indicative for an association with the PI3K complex II (PI3KC3-C2). Post-translationally, phosphorylated at Thr-145 by CDK5; this phosphorylation is required for autophagy induction in starved neurons and facilitates homodimerization. As to expression, highly expressed in heart, skeletal muscle, kidney and placenta. Detected at lower levels in brain, colon, thymus, spleen, liver, small intestine, lung and peripheral blood leukocytes.

Its subcellular location is the cytoplasm. The protein resides in the golgi apparatus membrane. It localises to the mitochondrion outer membrane. It is found in the cytoplasmic vesicle. The protein localises to the autophagosome membrane. Its subcellular location is the midbody. Its function is as follows. May be required for normal outer mitochondrial membrane dynamics. Required for coatomer-mediated retrograde transport in certain cells. May recruit other proteins to membranes with high curvature. May promote membrane fusion. Involved in activation of caspase-dependent apoptosis by promoting BAX/BAK1 activation. Isoform 1 acts proapoptotic in fibroblasts. Involved in caspase-independent apoptosis during nutrition starvation and involved in the regulation of autophagy. Activates lipid kinase activity of PIK3C3 during autophagy probably by associating with the PI3K complex II (PI3KC3-C2). Associated with PI3KC3-C2 during autophagy may regulate the trafficking of ATG9A from the Golgi complex to the peripheral cytoplasm for the formation of autophagosomes by inducing Golgi membrane tubulation and fragmentation. Involved in regulation of degradative endocytic trafficking and cytokinesis, probably in the context of PI3KC3-C2. Isoform 2 acts antiapoptotic in neuronal cells; involved in maintenance of mitochondrial morphology and promotes neuronal viability. The protein is Endophilin-B1 (SH3GLB1) of Homo sapiens (Human).